The chain runs to 182 residues: Large ribosomal subunit protein uL6 (182 aa).

The protein belongs to the universal ribosomal protein uL6 family. As to quaternary structure, part of the 50S ribosomal subunit.

This protein binds to the 23S rRNA, and is important in its secondary structure. It is located near the subunit interface in the base of the L7/L12 stalk, and near the tRNA binding site of the peptidyltransferase center. The protein is Large ribosomal subunit protein uL6 of Nostoc punctiforme (strain ATCC 29133 / PCC 73102).